We begin with the raw amino-acid sequence, 323 residues long: Caspase-1 (323 aa).

A propeptide spanning residues 1 to 33 (MTDECVTRNYGVGIRSPNGSENRGSFIMADNTD) is cleaved from the precursor. Active-site residues include H154 and C196. Residues 203–215 (GGITLEKGVTETD) constitute a propeptide that is removed on maturation.

It belongs to the peptidase C14A family. In terms of assembly, heterotetramer that consists of two anti-parallel arranged heterodimers, each one formed by a 22 kDa (p22) and a 13 kDa (p13) subunit.

Its function is as follows. Involved in the activation cascade of caspases responsible for apoptosis execution. Proteolytically cleaves poly(ADP-ribose) polymerase (PARP). Loss of zygotic DCP-1 function causes larval lethality and melanotic tumors. The polypeptide is Caspase-1 (Dcp-1) (Drosophila melanogaster (Fruit fly)).